The following is a 266-amino-acid chain: N-formylglutamate deformylase (266 aa).

It belongs to the N-formylglutamate deformylase family. As to quaternary structure, monomer.

The catalysed reaction is N-formyl-L-glutamate + H2O = formate + L-glutamate. Its pathway is amino-acid degradation; L-histidine degradation into L-glutamate; L-glutamate from N-formimidoyl-L-glutamate (deiminase route): step 2/2. Catalyzes the hydrolysis of N-formyl-L-glutamate to formate and L-glutamate. Shows weak activity with N-formyl-L-glutamine. The sequence is that of N-formylglutamate deformylase from Pseudomonas aeruginosa (strain ATCC 15692 / DSM 22644 / CIP 104116 / JCM 14847 / LMG 12228 / 1C / PRS 101 / PAO1).